The primary structure comprises 310 residues: Ribosomal RNA small subunit methyltransferase H (310 aa).

Residues 33–35 (AGH), D53, F79, D100, and Q107 contribute to the S-adenosyl-L-methionine site.

The protein belongs to the methyltransferase superfamily. RsmH family.

Its subcellular location is the cytoplasm. It carries out the reaction cytidine(1402) in 16S rRNA + S-adenosyl-L-methionine = N(4)-methylcytidine(1402) in 16S rRNA + S-adenosyl-L-homocysteine + H(+). Specifically methylates the N4 position of cytidine in position 1402 (C1402) of 16S rRNA. This is Ribosomal RNA small subunit methyltransferase H from Clostridium botulinum (strain Eklund 17B / Type B).